The following is a 342-amino-acid chain: MTAAAPTDVCIIISAKNAADTIARAVASALAEPEAAEVVVIDDGSTDDSASVARAADDGTGRLNVVRFEENRGPAAARNHAIAISHSPLIGVLDADDFFFPGRLGQLLSQDGWDFIADNIAFIDAAQAATAHGRIDRFAPTPRLIDLVGFVEGNISRRGVRRGEIGFLKPLMRRAFLDQHGLRYNETLRLGEDYDLYARALANGARYKIIHSCGYAAVVRGNSLSGSHRTIDLKRLYEADRAILAGSRLSSDAEAAVRRHERHIRDRYELRHFLDLKNQQGFGRAFGYALTHPAALPAIIGGILADKTERFRPSGSPAPVALGGKGDVRYLLETLAVDQPQK.

The protein belongs to the glycosyltransferase 2 family.

It localises to the cytoplasm. It functions in the pathway glycan metabolism; exopolysaccharide biosynthesis. Its function is as follows. Glycosyltransferase required for the synthesis of succinoglycan (EPS I). Needed for the addition of the sixth sugar (glucose), catalyzes the formation of a beta-1,6 linkage between the fifth and sixth sugar. The sequence is that of Succinoglycan biosynthesis protein ExoU (exoU) from Rhizobium meliloti (strain 1021) (Ensifer meliloti).